The following is an 81-amino-acid chain: Short neurotoxin D (81 aa).

An N-terminal signal peptide occupies residues 1–21 (MKTLLLTLVVVTIVCLDLGYT). Cystine bridges form between C24–C43, C38–C60, C62–C73, and C74–C79.

Belongs to the three-finger toxin family. Short-chain subfamily. Type I alpha-neurotoxin sub-subfamily. Expressed by the venom gland.

The protein resides in the secreted. Its function is as follows. Binds to muscle nicotinic acetylcholine receptor (nAChR) and inhibit acetylcholine from binding to the receptor, thereby impairing neuromuscular transmission. The chain is Short neurotoxin D from Aipysurus laevis (Olive sea snake).